The chain runs to 328 residues: Malate dehydrogenase (328 aa).

12 to 18 is a binding site for NAD(+); sequence GAAGQIA. Residues arginine 93 and arginine 99 each coordinate substrate. Residues asparagine 106, glutamine 113, and 130-132 contribute to the NAD(+) site; that span reads VGN. Residues asparagine 132 and arginine 163 each coordinate substrate. Catalysis depends on histidine 188, which acts as the Proton acceptor.

This sequence belongs to the LDH/MDH superfamily. MDH type 2 family.

It catalyses the reaction (S)-malate + NAD(+) = oxaloacetate + NADH + H(+). Its function is as follows. Catalyzes the reversible oxidation of malate to oxaloacetate. The polypeptide is Malate dehydrogenase (Burkholderia ambifaria (strain ATCC BAA-244 / DSM 16087 / CCUG 44356 / LMG 19182 / AMMD) (Burkholderia cepacia (strain AMMD))).